The primary structure comprises 373 residues: Transaldolase (373 aa).

Catalysis depends on lysine 143, which acts as the Schiff-base intermediate with substrate.

The protein belongs to the transaldolase family. Type 2 subfamily.

The protein resides in the cytoplasm. The catalysed reaction is D-sedoheptulose 7-phosphate + D-glyceraldehyde 3-phosphate = D-erythrose 4-phosphate + beta-D-fructose 6-phosphate. It functions in the pathway carbohydrate degradation; pentose phosphate pathway; D-glyceraldehyde 3-phosphate and beta-D-fructose 6-phosphate from D-ribose 5-phosphate and D-xylulose 5-phosphate (non-oxidative stage): step 2/3. In terms of biological role, transaldolase is important for the balance of metabolites in the pentose-phosphate pathway. This is Transaldolase from Mycolicibacterium paratuberculosis (strain ATCC BAA-968 / K-10) (Mycobacterium paratuberculosis).